Consider the following 561-residue polypeptide: DNA ligase B (561 aa).

Lys125 functions as the N6-AMP-lysine intermediate in the catalytic mechanism.

The protein belongs to the NAD-dependent DNA ligase family. LigB subfamily.

The catalysed reaction is NAD(+) + (deoxyribonucleotide)n-3'-hydroxyl + 5'-phospho-(deoxyribonucleotide)m = (deoxyribonucleotide)n+m + AMP + beta-nicotinamide D-nucleotide.. In terms of biological role, catalyzes the formation of phosphodiester linkages between 5'-phosphoryl and 3'-hydroxyl groups in double-stranded DNA using NAD as a coenzyme and as the energy source for the reaction. The chain is DNA ligase B from Escherichia coli O127:H6 (strain E2348/69 / EPEC).